Here is a 101-residue protein sequence, read N- to C-terminus: Small ribosomal subunit protein uS14A (101 aa).

2 disordered regions span residues 1–20 (MAKK…VARY) and 28–72 (TEII…RPRG). Basic and acidic residues-rich tracts occupy residues 38–53 (EAER…RQPR) and 61–70 (RNRDSVDGRP).

Belongs to the universal ribosomal protein uS14 family. As to quaternary structure, part of the 30S ribosomal subunit. Contacts proteins S3 and S10.

Functionally, binds 16S rRNA, required for the assembly of 30S particles and may also be responsible for determining the conformation of the 16S rRNA at the A site. The chain is Small ribosomal subunit protein uS14A from Streptomyces avermitilis (strain ATCC 31267 / DSM 46492 / JCM 5070 / NBRC 14893 / NCIMB 12804 / NRRL 8165 / MA-4680).